We begin with the raw amino-acid sequence, 325 residues long: Small ribosomal subunit protein RACK1 (325 aa).

7 WD repeats span residues 5–48, 58–99, 100–141, 143–186, 187–227, 228–268, and 269–320; these read QMKL…WDVD, IGRP…WDLN, QGVS…WNTL, QCKY…WNLG, NCRL…LWDL, NEGK…WDLE, and DKKE…YQVS.

Belongs to the WD repeat G protein beta family. Ribosomal protein RACK1 subfamily.

Functionally, required for the expression of antimicrobial peptide nlp-29 in response to fungal infection or physical injury. This Caenorhabditis elegans protein is Small ribosomal subunit protein RACK1 (rack-1).